The following is a 163-amino-acid chain: Nucleotide-binding protein GK0742 (163 aa).

The protein belongs to the YajQ family.

In terms of biological role, nucleotide-binding protein. The protein is Nucleotide-binding protein GK0742 of Geobacillus kaustophilus (strain HTA426).